Reading from the N-terminus, the 416-residue chain is Dihydrolipoyllysine-residue succinyltransferase component of 2-oxoglutarate dehydrogenase complex (416 aa).

A Lipoyl-binding domain is found at 3–78 (IVDVKVPQLS…VADEIIAKID (76 aa)). The residue at position 44 (Lys44) is an N6-lipoyllysine. In terms of domain architecture, Peripheral subunit-binding (PSBD) spans 115–152 (VAMPSAAKLMAEAGLSAGQVAGTGKDGRITKGDALAAA). Catalysis depends on residues His387 and Asp391.

The protein belongs to the 2-oxoacid dehydrogenase family. As to quaternary structure, forms a 24-polypeptide structural core with octahedral symmetry. Part of the 2-oxoglutarate dehydrogenase (OGDH) complex composed of E1 (2-oxoglutarate dehydrogenase), E2 (dihydrolipoamide succinyltransferase) and E3 (dihydrolipoamide dehydrogenase); the complex contains multiple copies of the three enzymatic components (E1, E2 and E3). Requires (R)-lipoate as cofactor.

The catalysed reaction is N(6)-[(R)-dihydrolipoyl]-L-lysyl-[protein] + succinyl-CoA = N(6)-[(R)-S(8)-succinyldihydrolipoyl]-L-lysyl-[protein] + CoA. The protein operates within amino-acid degradation; L-lysine degradation via saccharopine pathway; glutaryl-CoA from L-lysine: step 6/6. In terms of biological role, E2 component of the 2-oxoglutarate dehydrogenase (OGDH) complex which catalyzes the second step in the conversion of 2-oxoglutarate to succinyl-CoA and CO(2). The sequence is that of Dihydrolipoyllysine-residue succinyltransferase component of 2-oxoglutarate dehydrogenase complex (sucB) from Cupriavidus necator (strain ATCC 17699 / DSM 428 / KCTC 22496 / NCIMB 10442 / H16 / Stanier 337) (Ralstonia eutropha).